The following is a 310-amino-acid chain: Dermonecrotic toxin LiSicTox-alphaII2 (310 aa).

Residues 1 to 18 (MLLRIALILGCWSILSEG) form the signal peptide. A propeptide spanning residues 19-26 (AENDIAER) is cleaved from the precursor. His38 is an active-site residue. Mg(2+) contacts are provided by Glu58 and Asp60. His74 acts as the Nucleophile in catalysis. 2 disulfides stabilise this stretch: Cys78/Cys84 and Cys80/Cys224. Residue Asn99 is glycosylated (N-linked (GlcNAc...) asparagine). Asp118 is a binding site for Mg(2+).

The protein belongs to the arthropod phospholipase D family. Class II subfamily. It depends on Mg(2+) as a cofactor. In terms of tissue distribution, expressed by the venom gland.

It localises to the secreted. It catalyses the reaction an N-(acyl)-sphingosylphosphocholine = an N-(acyl)-sphingosyl-1,3-cyclic phosphate + choline. The catalysed reaction is an N-(acyl)-sphingosylphosphoethanolamine = an N-(acyl)-sphingosyl-1,3-cyclic phosphate + ethanolamine. The enzyme catalyses a 1-acyl-sn-glycero-3-phosphocholine = a 1-acyl-sn-glycero-2,3-cyclic phosphate + choline. It carries out the reaction a 1-acyl-sn-glycero-3-phosphoethanolamine = a 1-acyl-sn-glycero-2,3-cyclic phosphate + ethanolamine. Dermonecrotic toxins cleave the phosphodiester linkage between the phosphate and headgroup of certain phospholipids (sphingolipid and lysolipid substrates), forming an alcohol (often choline) and a cyclic phosphate. This toxin acts on sphingomyelin (SM). It may also act on ceramide phosphoethanolamine (CPE), lysophosphatidylcholine (LPC) and lysophosphatidylethanolamine (LPE), but not on lysophosphatidylserine (LPS), and lysophosphatidylglycerol (LPG). It acts by transphosphatidylation, releasing exclusively cyclic phosphate products as second products. Induces dermonecrosis, hemolysis, increased vascular permeability, edema, inflammatory response, and platelet aggregation. This chain is Dermonecrotic toxin LiSicTox-alphaII2, found in Loxosceles intermedia (Brown spider).